Consider the following 29-residue polypeptide: Cytochrome b6-f complex subunit 8 (29 aa).

Residues 3 to 23 (IISLAWAALMVVFTFSLSLVV) form a helical membrane-spanning segment.

This sequence belongs to the PetN family. The 4 large subunits of the cytochrome b6-f complex are cytochrome b6, subunit IV (17 kDa polypeptide, PetD), cytochrome f and the Rieske protein, while the 4 small subunits are PetG, PetL, PetM and PetN. The complex functions as a dimer.

It is found in the plastid. The protein resides in the chloroplast thylakoid membrane. Component of the cytochrome b6-f complex, which mediates electron transfer between photosystem II (PSII) and photosystem I (PSI), cyclic electron flow around PSI, and state transitions. The sequence is that of Cytochrome b6-f complex subunit 8 from Nicotiana tomentosiformis (Tobacco).